The chain runs to 484 residues: UDP-N-acetylmuramate--L-alanine ligase (484 aa).

An ATP-binding site is contributed by 125-131; it reads GTHGKTT.

The protein belongs to the MurCDEF family.

Its subcellular location is the cytoplasm. The catalysed reaction is UDP-N-acetyl-alpha-D-muramate + L-alanine + ATP = UDP-N-acetyl-alpha-D-muramoyl-L-alanine + ADP + phosphate + H(+). The protein operates within cell wall biogenesis; peptidoglycan biosynthesis. Its function is as follows. Cell wall formation. This is UDP-N-acetylmuramate--L-alanine ligase from Buchnera aphidicola subsp. Acyrthosiphon pisum (strain 5A).